The sequence spans 353 residues: Probable peptidoglycan glycosyltransferase FtsW (353 aa).

The next 8 helical transmembrane spans lie at 26–46 (IFYF…PMSF), 53–73 (LILI…KSVH), 115–135 (FWGF…LLAE), 137–157 (DLGT…LSGV), 162–182 (FFII…FEPY), 242–262 (IIGE…IFFI), 288–308 (IGLW…GILP), and 314–334 (LPLI…ICIL).

This sequence belongs to the SEDS family. FtsW subfamily.

It is found in the cell inner membrane. It carries out the reaction [GlcNAc-(1-&gt;4)-Mur2Ac(oyl-L-Ala-gamma-D-Glu-L-Lys-D-Ala-D-Ala)](n)-di-trans,octa-cis-undecaprenyl diphosphate + beta-D-GlcNAc-(1-&gt;4)-Mur2Ac(oyl-L-Ala-gamma-D-Glu-L-Lys-D-Ala-D-Ala)-di-trans,octa-cis-undecaprenyl diphosphate = [GlcNAc-(1-&gt;4)-Mur2Ac(oyl-L-Ala-gamma-D-Glu-L-Lys-D-Ala-D-Ala)](n+1)-di-trans,octa-cis-undecaprenyl diphosphate + di-trans,octa-cis-undecaprenyl diphosphate + H(+). Its pathway is cell wall biogenesis; peptidoglycan biosynthesis. In terms of biological role, peptidoglycan polymerase that is essential for cell division. The protein is Probable peptidoglycan glycosyltransferase FtsW of Buchnera aphidicola subsp. Schizaphis graminum (strain Sg).